Reading from the N-terminus, the 211-residue chain is Tudor-interacting repair regulator protein (211 aa).

Glycyl lysine isopeptide (Lys-Gly) (interchain with G-Cter in ubiquitin) cross-links involve residues K10 and K151. The interaction with PXN stretch occupies residues 118-205; it reads TLEQLHAVEI…TEKQKKALEK (88 aa).

It belongs to the Nudix hydrolase family. TIRR subfamily. As to quaternary structure, homodimer. Interacts with TP53BP1 (via the Tudor-like domain); interaction is abolished following DNA damage and TP53BP1 phosphorylation by ATM. Interacts (via the cytoplasmic part) with SDC4. Interacts with TGFB1I1 and PXN.

The protein resides in the nucleus. Functionally, key regulator of TP53BP1 required to stabilize TP53BP1 and regulate its recruitment to chromatin. In absence of DNA damage, interacts with the tandem Tudor-like domain of TP53BP1, masking the region that binds histone H4 dimethylated at 'Lys-20' (H4K20me2), thereby preventing TP53BP1 recruitment to chromatin and maintaining TP53BP1 localization to the nucleus. Following DNA damage, ATM-induced phosphorylation of TP53BP1 and subsequent recruitment of RIF1 leads to dissociate NUDT16L1/TIRR from TP53BP1, unmasking the tandem Tudor-like domain and allowing recruitment of TP53BP1 to DNA double strand breaks (DSBs). Binds U8 snoRNA. The sequence is that of Tudor-interacting repair regulator protein from Mus musculus (Mouse).